The sequence spans 314 residues: tRNA dimethylallyltransferase (314 aa).

Residue 9–16 (GPTAVGKT) coordinates ATP. 11 to 16 (TAVGKT) lines the substrate pocket. An interaction with substrate tRNA region spans residues 34-37 (DSVQ).

This sequence belongs to the IPP transferase family. As to quaternary structure, monomer. It depends on Mg(2+) as a cofactor.

The enzyme catalyses adenosine(37) in tRNA + dimethylallyl diphosphate = N(6)-dimethylallyladenosine(37) in tRNA + diphosphate. Its function is as follows. Catalyzes the transfer of a dimethylallyl group onto the adenine at position 37 in tRNAs that read codons beginning with uridine, leading to the formation of N6-(dimethylallyl)adenosine (i(6)A). This is tRNA dimethylallyltransferase from Desulfitobacterium hafniense (strain DSM 10664 / DCB-2).